Here is an 886-residue protein sequence, read N- to C-terminus: Isoleucine--tRNA ligase (886 aa).

The short motif at 60–70 (PYANGDIHIGH) is the 'HIGH' region element. Position 546 (Glu546) interacts with L-isoleucyl-5'-AMP. A 'KMSKS' region motif is present at residues 587 to 591 (KMSKS). An ATP-binding site is contributed by Lys590. Residues Cys856, Cys859, Cys870, and Cys873 each contribute to the Zn(2+) site.

It belongs to the class-I aminoacyl-tRNA synthetase family. IleS type 1 subfamily. As to quaternary structure, monomer. Requires Zn(2+) as cofactor.

It localises to the cytoplasm. The enzyme catalyses tRNA(Ile) + L-isoleucine + ATP = L-isoleucyl-tRNA(Ile) + AMP + diphosphate. Functionally, catalyzes the attachment of isoleucine to tRNA(Ile). As IleRS can inadvertently accommodate and process structurally similar amino acids such as valine, to avoid such errors it has two additional distinct tRNA(Ile)-dependent editing activities. One activity is designated as 'pretransfer' editing and involves the hydrolysis of activated Val-AMP. The other activity is designated 'posttransfer' editing and involves deacylation of mischarged Val-tRNA(Ile). The polypeptide is Isoleucine--tRNA ligase (Mesomycoplasma hyopneumoniae (strain 232) (Mycoplasma hyopneumoniae)).